The primary structure comprises 484 residues: Glutamate--tRNA ligase (484 aa).

The 'HIGH' region signature appears at 11-21 (PSPTGYLHIGN). The 'KMSKS' region signature appears at 252 to 256 (KLSKR). Lysine 255 is an ATP binding site.

It belongs to the class-I aminoacyl-tRNA synthetase family. Glutamate--tRNA ligase type 1 subfamily. In terms of assembly, monomer.

The protein resides in the cytoplasm. The catalysed reaction is tRNA(Glu) + L-glutamate + ATP = L-glutamyl-tRNA(Glu) + AMP + diphosphate. In terms of biological role, catalyzes the attachment of glutamate to tRNA(Glu) in a two-step reaction: glutamate is first activated by ATP to form Glu-AMP and then transferred to the acceptor end of tRNA(Glu). The chain is Glutamate--tRNA ligase from Staphylococcus epidermidis (strain ATCC 35984 / DSM 28319 / BCRC 17069 / CCUG 31568 / BM 3577 / RP62A).